The primary structure comprises 246 residues: ATP synthase subunit a (246 aa).

A propeptide spans 1–3 (removed in mature form); that stretch reads MIY. The next 7 membrane-spanning stretches (helical) occupy residues 25 to 45, 51 to 71, 79 to 99, 112 to 132, 138 to 158, 178 to 198, and 203 to 223; these read VNNY…SVFL, LGFN…LNMV, GGMY…ANLV, LVAI…MGLS, FFAL…LVLI, VLSG…LMGS, and FMGG…EFAI.

Belongs to the ATPase A chain family. In terms of assembly, F-type ATPases have 2 components, CF(1) - the catalytic core - and CF(0) - the membrane proton channel. CF(1) has five subunits: alpha(3), beta(3), gamma(1), delta(1), epsilon(1). CF(0) has three main subunits: a, b and c.

The protein localises to the mitochondrion inner membrane. Functionally, mitochondrial membrane ATP synthase (F(1)F(0) ATP synthase or Complex V) produces ATP from ADP in the presence of a proton gradient across the membrane which is generated by electron transport complexes of the respiratory chain. F-type ATPases consist of two structural domains, F(1) - containing the extramembraneous catalytic core and F(0) - containing the membrane proton channel, linked together by a central stalk and a peripheral stalk. During catalysis, ATP synthesis in the catalytic domain of F(1) is coupled via a rotary mechanism of the central stalk subunits to proton translocation. Key component of the proton channel; it may play a direct role in the translocation of protons across the membrane. This chain is ATP synthase subunit a (ATP6), found in Debaryomyces hansenii (strain ATCC 36239 / CBS 767 / BCRC 21394 / JCM 1990 / NBRC 0083 / IGC 2968) (Yeast).